We begin with the raw amino-acid sequence, 386 residues long: F420 non-reducing hydrogenase II small subunit (386 aa).

Positions 1–51 (MVEMSTGMKNLTRTLESMDFLKMDRRTFMKAVSALGATAFLGTYQTEIVNA) form a signal peptide, tat-type signal. Positions 67, 70, 178, 227, 273, 276, 296, and 302 each coordinate [4Fe-4S] cluster. Residues cysteine 311, cysteine 330, and cysteine 333 each contribute to the [3Fe-4S] cluster site.

This sequence belongs to the [NiFe]/[NiFeSe] hydrogenase small subunit family. As to quaternary structure, composed of a large subunit (VhtA), a small subunit (VhtG) and a cytochrome subunit (VhtC). [4Fe-4S] cluster is required as a cofactor. Requires [3Fe-4S] cluster as cofactor. In terms of processing, predicted to be exported by the Tat system. The position of the signal peptide cleavage has not been experimentally proven.

The protein localises to the cell membrane. The enzyme catalyses methanophenazine + H2 = dihydromethanophenazine. In terms of biological role, part of the F420 non-reducing hydrogenase II complex that catalyzes the reduction of methanophenazine to dihydromethanophenazine. This is F420 non-reducing hydrogenase II small subunit from Methanosarcina mazei (strain ATCC BAA-159 / DSM 3647 / Goe1 / Go1 / JCM 11833 / OCM 88) (Methanosarcina frisia).